We begin with the raw amino-acid sequence, 431 residues long: Cleavage stimulation factor subunit 1 (431 aa).

The hydrophobic stretch occupies residues 14 to 35 (LYKLIISQLLYDGYISIANGLI). WD repeat units follow at residues 106–145 (SHKG…AKSA), 171–210 (DHVD…AKRA), 215–254 (QEAE…CFVS), 260–301 (QHTD…TTFE), 303–343 (AHDG…TLVR), and 395–430 (GHNN…RSTT).

In terms of assembly, homodimer. The CSTF complex is composed of CSTF1 (50 kDa subunit), CSTF2 (64 kDa subunit) and CSTF3 (77 kDa subunit). Interacts (via repeats WD) directly with CSTF3. Interacts (via repeat WD6) with BARD1. Interacts with ERCC6. The N-terminus is blocked.

Its subcellular location is the nucleus. Functionally, one of the multiple factors required for polyadenylation and 3'-end cleavage of mammalian pre-mRNAs. May be responsible for the interaction of CSTF with other factors to form a stable complex on the pre-mRNA. In Homo sapiens (Human), this protein is Cleavage stimulation factor subunit 1 (CSTF1).